A 248-amino-acid polypeptide reads, in one-letter code: tRNA (guanine-N(7)-)-methyltransferase (248 aa).

S-adenosyl-L-methionine contacts are provided by residues Gly-70, 93-94 (EI), 129-130 (NA), and Leu-149. Residue Asp-152 is part of the active site. 227–229 (SEE) serves as a coordination point for S-adenosyl-L-methionine.

This sequence belongs to the class I-like SAM-binding methyltransferase superfamily. TrmB family.

The protein resides in the nucleus. It catalyses the reaction guanosine(46) in tRNA + S-adenosyl-L-methionine = N(7)-methylguanosine(46) in tRNA + S-adenosyl-L-homocysteine. It participates in tRNA modification; N(7)-methylguanine-tRNA biosynthesis. Catalyzes the formation of N(7)-methylguanine at position 46 (m7G46) in tRNA. The chain is tRNA (guanine-N(7)-)-methyltransferase from Drosophila mojavensis (Fruit fly).